We begin with the raw amino-acid sequence, 863 residues long: MEDALIADEQLDRYPIGSDPWIDSLRDIDSDAMELDDLDVSKLNVEQAVRLWSRLSAWVEGDQVAYYVKDAPLSSDAAYDARMNCLKRLESEFPQLDTPQSPTHRVGGTFSNDFTAVRHPSQMMSLDDVFSFEELRAWYDGVRKDLEWPEDKLLPMTCEVKIDGLALNLIYRNGVLTQGLTRGDGVTGEDITMNVRTIHSIPTNLDGPEGDIPDMVEIRGEVFMRWDDFHKLNEANEDAGRPPFANPRNAAAGSLRQKDPRITAQRHLSFYAHGIGELVWGSGKPVDVADEVRNQSDAYTMYRKWGVPISPHNREVTDFDQILDMIEYYGEHRGDIEHALDGIVVKVDDLALQRRLGSTSRAPRWAIAYKYPPEEVNTKLLNIVVQVGRTGRVTPVAILNPVYVAGSTVSRTTLHNAYEVKRKGILIGDTVVVRKAGDVIPELVGPVIAKREGHEQDLREFVMPTRCPSCDTVLRYEKEGDKDLRCPNSESCPAQLAERVINLAARKAFDIEHLGDQSAVALTNPEDNRPDSVEAYAPGVREIVVEPGEEPAPYLAPSGLELPPIQEPVLTSEANLFDLEASDLRDVYVWREAQIIEVRRHVDSHGKERKVRHRLGGSGLWHREPAFWSGVKDAPLKKDANRKTVKDSEGNPEYEVKPDAVIVGHGRNGRPRIEEPTENTRKMLDEIEKAKHTDLSRVLVALSIRHVGPPTAFTLAKHFKTLDALADASAEELEQIDGIGAEIADSIATFFEEARMPGNWRGRVLEAWKAAGVGMSTHDEGLPQTLEGKSVVVTGTLEHFSRESAKEAIERRGGKASGSVSRKTDWVVVGANPGSKATKAEELGIPIIDEQQFDTLLATGDVQ.

NAD(+)-binding positions include 76–80, 125–126, and E159; these read DAAYD and SL. The N6-AMP-lysine intermediate role is filled by K161. NAD(+) is bound by residues R182 and E221. The segment at 237-256 is disordered; that stretch reads EDAGRPPFANPRNAAAGSLR. Over residues 241-253 the composition is skewed to low complexity; the sequence is RPPFANPRNAAAG. NAD(+) is bound by residues K346 and K370. Positions 467, 470, 486, and 492 each coordinate Zn(2+). The BRCT domain occupies 781–863; sequence GLPQTLEGKS…DTLLATGDVQ (83 aa).

It belongs to the NAD-dependent DNA ligase family. LigA subfamily. Mg(2+) serves as cofactor. It depends on Mn(2+) as a cofactor.

It catalyses the reaction NAD(+) + (deoxyribonucleotide)n-3'-hydroxyl + 5'-phospho-(deoxyribonucleotide)m = (deoxyribonucleotide)n+m + AMP + beta-nicotinamide D-nucleotide.. Functionally, DNA ligase that catalyzes the formation of phosphodiester linkages between 5'-phosphoryl and 3'-hydroxyl groups in double-stranded DNA using NAD as a coenzyme and as the energy source for the reaction. It is essential for DNA replication and repair of damaged DNA. This chain is DNA ligase, found in Bifidobacterium animalis subsp. lactis (strain AD011).